The primary structure comprises 296 residues: Acetylglutamate kinase (296 aa).

Residues 69 to 70, Arg-91, and Asn-193 contribute to the substrate site; that span reads GG.

This sequence belongs to the acetylglutamate kinase family. ArgB subfamily.

The protein resides in the cytoplasm. The enzyme catalyses N-acetyl-L-glutamate + ATP = N-acetyl-L-glutamyl 5-phosphate + ADP. Its pathway is amino-acid biosynthesis; L-arginine biosynthesis; N(2)-acetyl-L-ornithine from L-glutamate: step 2/4. Its function is as follows. Catalyzes the ATP-dependent phosphorylation of N-acetyl-L-glutamate. The chain is Acetylglutamate kinase from Delftia acidovorans (strain DSM 14801 / SPH-1).